Reading from the N-terminus, the 165-residue chain is ATP synthase subunit b (165 aa).

A helical membrane pass occupies residues 10-30; sequence LIFWMLLSFGIVFAVLAKYGF.

This sequence belongs to the ATPase B chain family. F-type ATPases have 2 components, F(1) - the catalytic core - and F(0) - the membrane proton channel. F(1) has five subunits: alpha(3), beta(3), gamma(1), delta(1), epsilon(1). F(0) has three main subunits: a(1), b(2) and c(10-14). The alpha and beta chains form an alternating ring which encloses part of the gamma chain. F(1) is attached to F(0) by a central stalk formed by the gamma and epsilon chains, while a peripheral stalk is formed by the delta and b chains.

It localises to the cell inner membrane. Its function is as follows. F(1)F(0) ATP synthase produces ATP from ADP in the presence of a proton or sodium gradient. F-type ATPases consist of two structural domains, F(1) containing the extramembraneous catalytic core and F(0) containing the membrane proton channel, linked together by a central stalk and a peripheral stalk. During catalysis, ATP synthesis in the catalytic domain of F(1) is coupled via a rotary mechanism of the central stalk subunits to proton translocation. Component of the F(0) channel, it forms part of the peripheral stalk, linking F(1) to F(0). The polypeptide is ATP synthase subunit b (Bacteroides fragilis (strain ATCC 25285 / DSM 2151 / CCUG 4856 / JCM 11019 / LMG 10263 / NCTC 9343 / Onslow / VPI 2553 / EN-2)).